Reading from the N-terminus, the 195-residue chain is Cytochrome c biogenesis ATP-binding export protein CcmA (195 aa).

Residues 1-195 enclose the ABC transporter domain; it reads MLSLHQLQFN…IKSAQILQLV (195 aa). An ATP-binding site is contributed by 33-40; sequence GANGSGKS.

This sequence belongs to the ABC transporter superfamily. CcmA exporter (TC 3.A.1.107) family. The complex is composed of two ATP-binding proteins (CcmA) and two transmembrane proteins (CcmB).

The protein resides in the cell inner membrane. It catalyses the reaction heme b(in) + ATP + H2O = heme b(out) + ADP + phosphate + H(+). In terms of biological role, part of the ABC transporter complex CcmAB involved in the biogenesis of c-type cytochromes; once thought to export heme, this seems not to be the case, but its exact role is uncertain. Responsible for energy coupling to the transport system. This Rickettsia felis (strain ATCC VR-1525 / URRWXCal2) (Rickettsia azadi) protein is Cytochrome c biogenesis ATP-binding export protein CcmA.